Consider the following 264-residue polypeptide: Protein ADMETOS (264 aa).

Paternally imprinted expression in the endosperm.

In terms of biological role, product of a dosage-sensitive gene that contributes to the maintenance of paternally and maternally imprinted gene expression in the endosperm in order to balance parental contributions. Underlies postzygotic reproductive isolation by promoting triploid seed arrest in a genetic dosage-dependent manner, thus being a component of postzygotic interploidy hybridization barriers. The chain is Protein ADMETOS from Arabidopsis thaliana (Mouse-ear cress).